The primary structure comprises 1487 residues: Collagen alpha-1(II) chain (1487 aa).

The N-terminal stretch at methionine 1–glycine 25 is a signal peptide. A propeptide spans glutamine 26–alanine 181 (N-terminal propeptide). A VWFC domain is found at glycine 32–serine 90. The tract at residues alanine 96–aspartate 1234 is disordered. Basic and acidic residues-rich tracts occupy residues glutamine 105–valine 116 and proline 133–glutamate 154. Residues proline 158–proline 173 show a composition bias toward pro residues. The residue at position 190 (lysine 190) is a 5-hydroxylysine. Lysine 190 carries O-linked (Gal...) hydroxylysine glycosylation. Residues glycine 192–methionine 203 are compositionally biased toward low complexity. The triple-helical region stretch occupies residues glycine 201 to proline 1214. The segment covering proline 208–alanine 217 has biased composition (pro residues). 12 positions are modified to hydroxyproline: proline 212, proline 218, proline 230, proline 233, proline 245, proline 248, proline 251, proline 260, proline 269, proline 278, proline 281, and proline 284. The segment covering proline 218–methionine 239 has biased composition (low complexity). A compositionally biased stretch (pro residues) spans proline 241–lysine 250. Residues proline 251 to glutamate 265 are compositionally biased toward basic and acidic residues. Lysine 287 bears the 5-hydroxylysine mark. Residue lysine 287 is glycosylated (O-linked (Gal...) hydroxylysine). Proline 293 carries the hydroxyproline modification. Lysine 299 is modified (5-hydroxylysine). Lysine 299 is a glycosylation site (O-linked (Gal...) hydroxylysine). Position 305 is a hydroxyproline (proline 305). At lysine 308 the chain carries 5-hydroxylysine. O-linked (Gal...) hydroxylysine glycosylation occurs at lysine 308. The segment covering glutamate 310–proline 320 has biased composition (low complexity). Proline 314, proline 320, proline 329, proline 350, proline 356, proline 365, proline 368, and proline 371 each carry hydroxyproline. A compositionally biased stretch (low complexity) spans threonine 335–proline 350. The span at glycine 360 to glycine 369 shows a compositional bias: gly residues. 2 stretches are compositionally biased toward low complexity: residues alanine 370–alanine 382 and proline 391–proline 431. The residue at position 374 (lysine 374) is a 5-hydroxylysine. Lysine 374 carries an O-linked (Gal...) hydroxylysine glycan. 5 positions are modified to hydroxyproline: proline 395, proline 398, proline 401, proline 410, and proline 416. Lysine 419 bears the 5-hydroxylysine mark. Hydroxyproline occurs at positions 425, 431, 434, and 440. A compositionally biased stretch (pro residues) spans phenylalanine 433–proline 442. Lysine 452 is subject to 5-hydroxylysine. Proline 458 bears the Hydroxyproline mark. Residues lysine 464 and lysine 470 each carry the 5-hydroxylysine modification. 6 positions are modified to hydroxyproline: proline 473, proline 482, proline 497, proline 506, proline 512, and proline 518. Lysine 527 is subject to 5-hydroxylysine. The residue at position 530 (proline 530) is a Hydroxyproline. Position 542 is a 5-hydroxylysine (lysine 542). Hydroxyproline occurs at positions 551, 557, 566, 581, 587, 590, 599, and 605. Lysine 608 bears the 5-hydroxylysine mark. O-linked (Gal...) hydroxylysine glycosylation occurs at lysine 608. Proline 614 is modified (hydroxyproline). Lysine 620 carries the 5-hydroxylysine modification. O-linked (Gal...) hydroxylysine glycosylation occurs at lysine 620. Residues leucine 622–leucine 631 are compositionally biased toward low complexity. Proline 623, proline 626, proline 632, proline 644, proline 659, and proline 668 each carry hydroxyproline. Low complexity predominate over residues glutamine 656–leucine 667. A 3-hydroxyproline modification is found at proline 670. Hydroxyproline occurs at positions 671 and 674. Low complexity predominate over residues leucine 721–proline 736. Positions lysine 764–proline 775 are enriched in basic and acidic residues. 2 stretches are compositionally biased toward low complexity: residues alanine 833 to lysine 848 and proline 877 to asparagine 913. Proline 907 carries the post-translational modification 3-hydroxyproline. 3 positions are modified to 4-hydroxyproline: proline 908, proline 914, and proline 920. Residues alanine 1069–alanine 1079 are compositionally biased toward pro residues. The span at alanine 1091 to proline 1109 shows a compositional bias: low complexity. Basic and acidic residues predominate over residues arginine 1115–leucine 1129. Lysine 1130 is subject to 5-hydroxylysine. Lysine 1130 carries an O-linked (Gal...) hydroxylysine glycan. Proline 1144 is modified (3-hydroxyproline). The span at serine 1148–alanine 1157 shows a compositional bias: low complexity. At proline 1181 the chain carries 4-hydroxyproline. Proline 1186 is modified (3-hydroxyproline). Proline 1187 carries the post-translational modification 4-hydroxyproline. A compositionally biased stretch (pro residues) spans alanine 1199–proline 1216. The residue at position 1201 (proline 1201) is a 3-hydroxyproline. 4-hydroxyproline is present on residues proline 1202 and proline 1205. 3-hydroxyproline is present on proline 1207. 4-hydroxyproline occurs at positions 1208 and 1211. Proline 1213 carries the 3-hydroxyproline modification. Proline 1214 is subject to 4-hydroxyproline. The segment at glycine 1215–alanine 1241 is nonhelical region (C-terminal). Residues alanine 1253–leucine 1487 form the Fibrillar collagen NC1 domain. Cystine bridges form between cysteine 1283–cysteine 1315, cysteine 1323–cysteine 1485, and cysteine 1393–cysteine 1438. Ca(2+) is bound by residues aspartate 1301, asparagine 1303, glutamine 1304, cysteine 1306, and aspartate 1309. The N-linked (GlcNAc...) asparagine glycan is linked to asparagine 1388.

This sequence belongs to the fibrillar collagen family. In terms of assembly, homotrimers of alpha 1(II) chains. Probably 3-hydroxylated on prolines by LEPREL1. Proline residues at the third position of the tripeptide repeating unit (G-X-P) are hydroxylated in some or all of the chains. Proline residues at the second position of the tripeptide repeating unit (G-P-X) are hydroxylated in some of the chains. In terms of processing, O-linked glycans consist of Glc-Gal disaccharides bound to the oxygen atom of post-translationally added hydroxyl groups. Post-translationally, contains mostly 4-hydroxyproline. Prolines at the third position of the tripeptide repeating unit (G-X-P) are 4-hydroxylated in some or all of the chains. Contains 3-hydroxyproline at a few sites. This modification occurs on the first proline residue in the sequence motif Gly-Pro-Hyp, where Hyp is 4-hydroxyproline. In terms of processing, lysine residues at the third position of the tripeptide repeating unit (G-X-Y) are 5-hydroxylated in some or all of the chains. Post-translationally, O-glycosylated on hydroxylated lysine residues. The O-linked glycan consists of a Glc-Gal disaccharide.

It localises to the secreted. Its subcellular location is the extracellular space. The protein resides in the extracellular matrix. In terms of biological role, type II collagen is specific for cartilaginous tissues. It is essential for the normal embryonic development of the skeleton, for linear growth and for the ability of cartilage to resist compressive forces. This chain is Collagen alpha-1(II) chain, found in Bos taurus (Bovine).